The chain runs to 256 residues: Type III pantothenate kinase (256 aa).

6-13 (DVGNTNMV) contributes to the ATP binding site. Residues Tyr-100 and 107–110 (GADR) contribute to the substrate site. Asp-109 (proton acceptor) is an active-site residue. Position 129 (Asp-129) interacts with K(+). Thr-132 contributes to the ATP binding site. Thr-184 is a substrate binding site.

This sequence belongs to the type III pantothenate kinase family. Homodimer. The cofactor is NH4(+). K(+) is required as a cofactor.

The protein resides in the cytoplasm. It catalyses the reaction (R)-pantothenate + ATP = (R)-4'-phosphopantothenate + ADP + H(+). Its pathway is cofactor biosynthesis; coenzyme A biosynthesis; CoA from (R)-pantothenate: step 1/5. Functionally, catalyzes the phosphorylation of pantothenate (Pan), the first step in CoA biosynthesis. The polypeptide is Type III pantothenate kinase (Clostridioides difficile (strain 630) (Peptoclostridium difficile)).